The sequence spans 663 residues: Meiotically up-regulated gene 60 protein (663 aa).

The region spanning Pro-578–Leu-644 is the KH domain.

Its subcellular location is the cytoplasm. It localises to the nucleus. The protein resides in the cytoskeleton. The protein localises to the microtubule organizing center. It is found in the spindle pole body. Functionally, has a role in meiosis. The polypeptide is Meiotically up-regulated gene 60 protein (mug60) (Schizosaccharomyces pombe (strain 972 / ATCC 24843) (Fission yeast)).